The primary structure comprises 148 residues: Major microfilarial sheath protein (148 aa).

The first 18 residues, 1–18, serve as a signal peptide directing secretion; that stretch reads MCCKAILSFCILSSLGNA. The propeptide at 19–43 is removed in mature form; sequence LYFGSHRPQYLREVGQRQYPFEPQA. 5 repeats span residues 46–50, 54–58, 59–63, 64–68, and 71–75; these read MLPVP, MGPQP, MEPQP, and MGPQS. The tract at residues 46-75 is repeat-rich region; sequence MLPVPQQPMGPQPMGPQPMEPQPLPMGPQS. Residues 52–73 are compositionally biased toward pro residues; that stretch reads QPMGPQPMGPQPMEPQPLPMGP. The interval 52 to 80 is disordered; that stretch reads QPMGPQPMGPQPMEPQPLPMGPQSPQMQV.

The protein to B.pahangi filarial sheath protein. O-glycosylated.

The sequence is that of Major microfilarial sheath protein (GP22) from Litomosoides carinii.